A 908-amino-acid chain; its full sequence is 26S proteasome non-ATPase regulatory subunit 2 (908 aa).

The residue at position 1 (methionine 1) is an N-acetylmethionine. Residues 1–52 (MEEGGRDKAPVQPQQSPAAALGGTDEKPSGKERRDAGDKDKEQELSEEDKQL) form a disordered region. Residues 10–20 (PVQPQQSPAAA) are compositionally biased toward low complexity. A Phosphoserine modification is found at serine 16. Threonine 24 carries the post-translational modification Phosphothreonine. Positions 24–52 (TDEKPSGKERRDAGDKDKEQELSEEDKQL) are enriched in basic and acidic residues. Residues serine 29 and serine 147 each carry the phosphoserine modification. Residue tyrosine 194 is modified to Phosphotyrosine. Phosphoserine is present on residues serine 361 and serine 363. PC repeat units lie at residues 409 to 442 (SAAASLGMILLWDVDGGLTQIDKYLYSSEDYIKS), 443 to 479 (GALLACGIVNSGVRNECDPALALLSDYVLHNSNTMRL), 480 to 514 (GSIFGLGLAYAGSNREDVLTLLLPVMGDSKSSMEV), 517 to 551 (VTALACGMIAVGSCNGDVTSTILQTIMEKSETELK), and 560 to 589 (LGLGLNHLGKGEAIEAILAALEVVSEPFRS). Lysine 551 carries the post-translational modification N6-acetyllysine. A compositionally biased stretch (basic and acidic residues) spans 623 to 643 (KEKEEDKDKKEKKDKDKKEAP). The disordered stretch occupies residues 623–645 (KEKEEDKDKKEKKDKDKKEAPAD). PC repeat units lie at residues 692 to 723 (LALALISVSNPRLNILDTLSKFSHDADPEVSY) and 742 to 757 (AAMLRQLAQYHAKDPN). A required for interaction with UBLCP1 region spans residues 708-903 (DTLSKFSHDA…LEGFVILRKN (196 aa)).

Belongs to the proteasome subunit S2 family. Component of the 19S proteasome regulatory particle complex. The 26S proteasome consists of a 20S core particle (CP) and two 19S regulatory subunits (RP). The regulatory particle is made of a lid composed of 9 subunits, a base containing 6 ATPases and few additional components including PSMD2. Interacts with RPGRIP1L. Interacts with CRY1 in a KDM8-dependent manner. Interacts (via C-terminus) with phosphatase UBLCP1 (via ubiquitin-like domain); the interaction recruits UBLCP1 to the 19S regulatory particle where it dephosphorylates 19S subunit PSMC2/RPT1 which impairs PSMC2 ATPase activity and disrupts 26S proteasome assembly.

Its function is as follows. Component of the 26S proteasome, a multiprotein complex involved in the ATP-dependent degradation of ubiquitinated proteins. This complex plays a key role in the maintenance of protein homeostasis by removing misfolded or damaged proteins, which could impair cellular functions, and by removing proteins whose functions are no longer required. Therefore, the proteasome participates in numerous cellular processes, including cell cycle progression, apoptosis, or DNA damage repair. In terms of biological role, binds to the intracellular domain of tumor necrosis factor type 1 receptor. The binding domain of TRAP1 and TRAP2 resides outside the death domain of TNFR1. This is 26S proteasome non-ATPase regulatory subunit 2 (PSMD2) from Pongo abelii (Sumatran orangutan).